Reading from the N-terminus, the 133-residue chain is Small ribosomal subunit protein uS9 (133 aa).

The tract at residues 97–133 (MKQELKSQGFLTRDPRKKERKKYGRKKARKSFQFSKR) is disordered. Positions 114–133 (KERKKYGRKKARKSFQFSKR) are enriched in basic residues.

This sequence belongs to the universal ribosomal protein uS9 family.

This chain is Small ribosomal subunit protein uS9 (rpsI), found in Chlamydia muridarum (strain MoPn / Nigg).